Here is a 73-residue protein sequence, read N- to C-terminus: Translation initiation factor IF-1 (73 aa).

The S1-like domain maps to 1–73 (MSKKKDVIEM…TRGRITYRYK (73 aa)).

The protein belongs to the IF-1 family. Component of the 30S ribosomal translation pre-initiation complex which assembles on the 30S ribosome in the order IF-2 and IF-3, IF-1 and N-formylmethionyl-tRNA(fMet); mRNA recruitment can occur at any time during PIC assembly.

The protein localises to the cytoplasm. One of the essential components for the initiation of protein synthesis. Stabilizes the binding of IF-2 and IF-3 on the 30S subunit to which N-formylmethionyl-tRNA(fMet) subsequently binds. Helps modulate mRNA selection, yielding the 30S pre-initiation complex (PIC). Upon addition of the 50S ribosomal subunit IF-1, IF-2 and IF-3 are released leaving the mature 70S translation initiation complex. The sequence is that of Translation initiation factor IF-1 from Roseiflexus castenholzii (strain DSM 13941 / HLO8).